A 753-amino-acid polypeptide reads, in one-letter code: Neuroendocrine convertase 1 (753 aa).

The first 27 residues, 1–27 (MEQRGWTLQCTAFAFFCVWCALNSVKA), serve as a signal peptide directing secretion. Residues 28–110 (KRQFVNEWAA…QQYEKERSKR (83 aa)) constitute a propeptide that is removed on maturation. In terms of domain architecture, Peptidase S8 spans 129–450 (QWYLQDTRMT…FGLLNAKALV (322 aa)). Active-site charge relay system residues include Asp167 and His208. Cystine bridges form between Cys225/Cys374 and Cys317/Cys347. Ser382 serves as the catalytic Charge relay system. Residue Asn401 is glycosylated (N-linked (GlcNAc...) asparagine). Residues 460–597 (NVPEKKECVV…KLILHGTSSQ (138 aa)) form the P/Homo B domain. Cys467 and Cys494 are oxidised to a cystine. Residues 633–651 (QKSLNGNLLVPKNSSSSNV) show a composition bias toward polar residues. Residues 633-663 (QKSLNGNLLVPKNSSSSNVEGRRDEQVQGTP) form a disordered region. Asn645 carries an N-linked (GlcNAc...) asparagine glycan.

Belongs to the peptidase S8 family. Furin subfamily. Requires Ca(2+) as cofactor.

It localises to the cytoplasmic vesicle. The protein localises to the secretory vesicle. The catalysed reaction is Release of protein hormones, neuropeptides and renin from their precursors, generally by hydrolysis of -Lys-Arg-|- bonds.. Functionally, involved in the processing of hormone and other protein precursors at sites comprised of pairs of basic amino acid residues. Substrates include POMC, renin, enkephalin, dynorphin, somatostatin, insulin and AGRP. The chain is Neuroendocrine convertase 1 (Pcsk1) from Mus musculus (Mouse).